The sequence spans 233 residues: UPF0280 protein AF_0649 (233 aa).

The protein belongs to the UPF0280 family.

The polypeptide is UPF0280 protein AF_0649 (Archaeoglobus fulgidus (strain ATCC 49558 / DSM 4304 / JCM 9628 / NBRC 100126 / VC-16)).